The following is a 436-amino-acid chain: Retinoic acid receptor RXR (436 aa).

Positions 1 to 108 (MDRSEGMDTL…GPSPSPGLPH (108 aa)) are disordered. The interval 1 to 116 (MDRSEGMDTL…PHSSLHTKHI (116 aa)) is modulating. Over residues 13-22 (SMPSGMSMGM) the composition is skewed to low complexity. Polar residues-rich tracts occupy residues 40–49 (SSLTSPTSTH) and 62–76 (MASSTQPSPGPQQMH). The segment covering 85–98 (SSMGSPPMLCLSPS) has biased composition (low complexity). NR C4-type zinc fingers lie at residues 117 to 137 (CAICGDRASGKHYGVYSCEGC) and 153 to 172 (CRDDKNCMIDKRQRNRCQYC). The segment at residues 117 to 182 (CAICGDRASG…RYMKCLSMGM (66 aa)) is a DNA-binding region (nuclear receptor). The segment at 183–206 (KREAVQEERQRVKEKGDGEVESTS) is hinge. Residues 189–200 (EERQRVKEKGDG) show a composition bias toward basic and acidic residues. The disordered stretch occupies residues 189-209 (EERQRVKEKGDGEVESTSGAN). The region spanning 209–432 (NNDMPVEQIL…TFLMEMLENP (224 aa)) is the NR LBD domain. 9-cis-retinoate is bound by residues Arg290 and Ala301.

The protein belongs to the nuclear hormone receptor family. NR2 subfamily. Homodimer (via ligand-binding domain). Heterodimer. Homotetramer consisting of 2 canonical homodimers. Within the tetramer, each monomer binds one molecule of 9C-RA and a NCOA1-derived peptide containing an L-X(2)-L-L motif.

It is found in the nucleus. Functionally, ligand-dependent transcription factor probably involved in the retinoic acid response pathway. Binds 9-cis-retinoic acid (9C-RA) and, to a lesser extent, docosahexaenoic acid (DHA), phytanic acid, methoprene acid and oleic acid. Binds to double-stranded DNA sequences containing direct repeats (DR) with the consensus sequence 5'-[AG]GGTCA-3' and 1, 2, 3, 4 or 5 nucleotides in between (DR1, DR2, DR3. DR4 and DR5, respectively). Binding to DR1 is strongest. Transactivates gene expression when 9C-RA or DHA is bound. The chain is Retinoic acid receptor RXR from Biomphalaria glabrata (Bloodfluke planorb).